Consider the following 486-residue polypeptide: Endoglucanase 16 (486 aa).

Positions 1 to 30 (MANYKGRGNVMIRSMLLGLYGIINIVCVNG) are cleaved as a signal peptide. N-linked (GlcNAc...) asparagine glycosylation is present at Asn29. Asp87 acts as the Nucleophile in catalysis. Active-site residues include His407, Asp458, and Glu467.

This sequence belongs to the glycosyl hydrolase 9 (cellulase E) family.

The protein resides in the secreted. It carries out the reaction Endohydrolysis of (1-&gt;4)-beta-D-glucosidic linkages in cellulose, lichenin and cereal beta-D-glucans.. The protein is Endoglucanase 16 of Arabidopsis thaliana (Mouse-ear cress).